Reading from the N-terminus, the 225-residue chain is Urease accessory protein UreF (225 aa).

Belongs to the UreF family. UreD, UreF and UreG form a complex that acts as a GTP-hydrolysis-dependent molecular chaperone, activating the urease apoprotein by helping to assemble the nickel containing metallocenter of UreC. The UreE protein probably delivers the nickel.

It localises to the cytoplasm. In terms of biological role, required for maturation of urease via the functional incorporation of the urease nickel metallocenter. The protein is Urease accessory protein UreF of Geobacillus kaustophilus (strain HTA426).